The sequence spans 87 residues: uncharacterized protein (87 aa).

Belongs to the SF3B5 family.

This is an uncharacterized protein from Arabidopsis thaliana (Mouse-ear cress).